We begin with the raw amino-acid sequence, 149 residues long: VapC ribonuclease PF0355 (149 aa).

A PINc domain is found at 8 to 122 (TFDSLALIKM…ITDDSKRYEP (115 aa)). 2 residues coordinate Mg(2+): D10 and D98.

The protein belongs to the PINc/VapC protein family. The cofactor is Mg(2+).

In terms of biological role, toxic component of a type II toxin-antitoxin (TA) system. An RNase. The sequence is that of VapC ribonuclease PF0355 from Pyrococcus furiosus (strain ATCC 43587 / DSM 3638 / JCM 8422 / Vc1).